The primary structure comprises 185 residues: Elongation factor P (185 aa).

This sequence belongs to the elongation factor P family.

Its subcellular location is the cytoplasm. It participates in protein biosynthesis; polypeptide chain elongation. Involved in peptide bond synthesis. Stimulates efficient translation and peptide-bond synthesis on native or reconstituted 70S ribosomes in vitro. Probably functions indirectly by altering the affinity of the ribosome for aminoacyl-tRNA, thus increasing their reactivity as acceptors for peptidyl transferase. The polypeptide is Elongation factor P (Bordetella avium (strain 197N)).